The chain runs to 71 residues: Antitoxin VapB26 (71 aa).

Its function is as follows. Antitoxin component of a type II toxin-antitoxin (TA) system. Upon expression in M.smegmatis neutralizes the effect of cognate toxin VapC26. The protein is Antitoxin VapB26 (vapB26) of Mycobacterium tuberculosis (strain ATCC 25618 / H37Rv).